Here is a 442-residue protein sequence, read N- to C-terminus: Interferon-related developmental regulator 2 (442 aa).

The span at Met1–Gln15 shows a compositional bias: basic residues. The tract at residues Met1–Glu71 is disordered. A compositionally biased stretch (polar residues) spans Thr43–Glu56.

Belongs to the IFRD family. As to quaternary structure, associates with ribosomes; promoting ribosome inactivation. As to expression, expressed in many tissues including heart, brain, placenta, lung, liver, skeletal muscle, kidney and pancreas.

In terms of biological role, ribosome-binding protein that acts as an inhibitor of mRNA translation by promoting ribosome inactivation. Associates with the P- and E-sites of the ribosome and inserts a C-terminal helix into the mRNA exit channel to preclude translation. This is Interferon-related developmental regulator 2 from Homo sapiens (Human).